Here is a 169-residue protein sequence, read N- to C-terminus: Probable chemoreceptor glutamine deamidase CheD (169 aa).

The protein belongs to the CheD family.

It catalyses the reaction L-glutaminyl-[protein] + H2O = L-glutamyl-[protein] + NH4(+). Probably deamidates glutamine residues to glutamate on methyl-accepting chemotaxis receptors (MCPs), playing an important role in chemotaxis. In Solibacter usitatus (strain Ellin6076), this protein is Probable chemoreceptor glutamine deamidase CheD.